The following is a 2089-amino-acid chain: Rho GTPase-activating protein 32 (2089 aa).

Residues 24–52 are disordered; sequence TQLTDGDEEEREESFRKMKSSIHSEEDDF. Residues 131-245 form the PX; atypical domain; sequence GSIQLSLSEE…LTWMEIDNKG (115 aa). Residues 259 to 321 form the SH3 domain; it reads PAVGAAHVIK…PGHCVELINQ (63 aa). One can recognise a Rho-GAP domain in the interval 372-567; that stretch reads CDLGEHLLNS…FILNHVDVLF (196 aa). Phosphoserine occurs at positions 706, 709, 732, and 738. The segment covering 828–837 has biased composition (basic and acidic residues); that stretch reads KLSPSKKDAE. The interval 828–858 is disordered; the sequence is KLSPSKKDAEAGGSQSQTPGSTASSEPVSPV. The segment covering 840 to 854 has biased composition (polar residues); that stretch reads GSQSQTPGSTASSEP. Residues Ser852, Ser856, Ser892, and Ser952 each carry the phosphoserine modification. 3 disordered regions span residues 955-1037, 1119-1141, and 1154-1197; these read QLQL…PPPP, CNQP…TDSG, and LHRN…SVST. 2 stretches are compositionally biased toward polar residues: residues 998 to 1014 and 1132 to 1141; these read LSSQ…QTGA and PTQSNTTDSG. Residues 1175 to 1191 show a composition bias toward basic and acidic residues; sequence DSEKSDDHGSFPEDHAG. Position 1206 is a phosphoserine (Ser1206). The disordered stretch occupies residues 1221-1368; sequence GTSVDKPHHS…GDPAPIFLSD (148 aa). Residues 1225–1235 show a composition bias toward basic and acidic residues; the sequence is DKPHHSSELTD. Residues 1262–1275 show a composition bias toward low complexity; it reads TATMAYMMATPARA. The tract at residues 1395-1714 is interaction with GAB2; the sequence is RAPPLHLRAE…YNYAGLPPRP (320 aa). Residues Arg1526 and Arg1536 each carry the asymmetric dimethylarginine modification. Residue Ser1588 is modified to Phosphoserine. Residues 1688 to 2089 are interaction with FYN; the sequence is SSRDFAFYNP…PHPDTQIHAE (402 aa). Disordered regions lie at residues 1801-1865 and 1881-2002; these read PGKT…QSSL and RAHQ…LERD. The segment covering 1826–1841 has biased composition (basic and acidic residues); it reads GDERFYRKHPESEFDR. Polar residues predominate over residues 1850–1865; it reads STQAEKPSLPQKQSSL. Residues 1881–1892 show a composition bias toward basic and acidic residues; it reads RAHQEASHRQLC. Residues 1918 to 1939 show a composition bias toward polar residues; sequence SEPSNYHNSGKYMTSGQGSLTL. Basic and acidic residues-rich tracts occupy residues 1940–1954 and 1961–1975; these read NHKE…DRPR and PEKH…EEHF. Omega-N-methylarginine is present on Arg2039.

It belongs to the PX domain-containing GAP family. As to quaternary structure, interacts with NTRK1 (via cytoplasmic domain); the interaction is independent of the phosphorylation state of NTRK1. Interacts with SHC3 (via SH2 domain). Interacts with RASA1 (via SH3 domain); the interaction is necessary for the Ras activation and cell transforming activities of ARHGAP32. Interacts with GAB1 and GAB2. Interacts with CRK and CRKL. Found in a complex with CRKL and BCAR1; upon EGF stimulation BCAR1 may be replaced by EGFR. Interacts with NCK1 (via SH3 domain); NCK1 recruits phosphorylated BCAR1 to the complex. Isoform 2 interacts with FYN; the interaction appears to be dependent on tyrosine phosphorylation of ARHGAP32. Interacts with EGFR; the interaction requires EGF stimulation and is increased by SHC3. Interacts with CDC42; the interaction requires constitutively active CDC42. Interacts with CTNNB1, DLG4, CDH2 and GRIN2B. Interacts with GPHN. Post-translationally, isoform 2 is phosphorylated on multiple tyrosine residues by FYN. Phosphorylated tyrosine residues undergo dephosphorylation after stimulation of NMDA receptors. Phosphorylated in vitro by CaMK2 in the presence of calmodulin and calcium; which inhibits GAP activity. As to expression, isoform 1 and isoform 2 are highly expressed in brain, specially in cortex, corpus striatum, hippocampus and thalamus. Low levels in cerebellum, colon, small intestine, and kidney.

The protein localises to the postsynaptic density. Its subcellular location is the cell projection. The protein resides in the dendritic spine. It localises to the cytoplasm. It is found in the cell cortex. The protein localises to the endosome membrane. Its subcellular location is the golgi apparatus membrane. The protein resides in the endoplasmic reticulum membrane. It localises to the membrane. Its function is as follows. GTPase-activating protein (GAP) promoting GTP hydrolysis on RHOA, CDC42 and RAC1 small GTPases. May be involved in the differentiation of neuronal cells during the formation of neurite extensions. Involved in NMDA receptor activity-dependent actin reorganization in dendritic spines. May mediate cross-talks between Ras- and Rho-regulated signaling pathways in cell growth regulation. Isoform 2 has higher GAP activity. The sequence is that of Rho GTPase-activating protein 32 (Arhgap32) from Mus musculus (Mouse).